Reading from the N-terminus, the 940-residue chain is Glutamate receptor 2.9 (940 aa).

The N-terminal stretch at 1-23 (MKTNNTFLSYFVCGFLLMGVGLG) is a signal peptide. The Extracellular portion of the chain corresponds to 24-566 (QNQTSEIKVG…DTWVFLEPWS (543 aa)). 6 N-linked (GlcNAc...) asparagine glycosylation sites follow: N25, N39, N115, N338, N345, and N528. The helical transmembrane segment at 567–587 (LELWVTTGCFFVFIGFVVWLF) threads the bilayer. The Cytoplasmic segment spans residues 588-596 (EHRVNTDFR). A helical transmembrane segment spans residues 597–617 (GPPQYQIGTSLWFSFSTMVFA). Residues 618–628 (HRENVVSNLAR) are Cytoplasmic-facing. A helical transmembrane segment spans residues 629–649 (FVVVVWCFVVLVLTQSYTASL). Topologically, residues 650–811 (TSFLTVQSLQ…NRLNLSSFLG (162 aa)) are extracellular. N-linked (GlcNAc...) asparagine glycans are attached at residues N771, N776, and N805. A helical membrane pass occupies residues 812–832 (LFLIAGTAISFSLLVFVALFL). Residues 833 to 940 (YEHRHTLGDD…ESDIECRVEQ (108 aa)) are Cytoplasmic-facing. Disordered stretches follow at residues 876-900 (ISSP…QSPS) and 914-940 (PSEE…RVEQ).

This sequence belongs to the glutamate-gated ion channel (TC 1.A.10.1) family. In terms of assembly, may form heteromers. As to expression, expressed predominantly in roots.

It localises to the membrane. Glutamate-gated receptor that probably acts as a non-selective cation channel. May be involved in light-signal transduction and calcium homeostasis via the regulation of calcium influx into cells. The sequence is that of Glutamate receptor 2.9 (GLR2.9) from Arabidopsis thaliana (Mouse-ear cress).